Consider the following 381-residue polypeptide: Selenoprotein P (381 aa).

A signal peptide spans 1-19 (MWRSLGLALALCLLPLGGT). An N-linked (GlcNAc...) asparagine glycan is attached at N46. Position 59 (U59) is a non-standard amino acid, selenocysteine. Residues N83, N119, and N128 are each glycosylated (N-linked (GlcNAc...) asparagine). The interval 202 to 268 (SPHYHHEHHH…ENRDMPGSED (67 aa)) is disordered. Residues 204 to 217 (HYHHEHHHNHRHQH) are compositionally biased toward basic residues. Residues 218–229 (LGSSELSENQQP) show a composition bias toward polar residues. Basic residues predominate over residues 243–255 (LHHHHKHKGQHRQ). A Phosphoserine modification is found at S266. Residues U318 and U330 are each a non-standard amino acid (selenocysteine). An N-linked (GlcNAc...) asparagine glycan is attached at N338. Non-standard amino acids (selenocysteine) are located at U345, U352, U367, U369, U376, and U378. Positions 352–381 (UQISQQLIPTEASTSURUKNQAKKUEUPSN) are disordered. Polar residues predominate over residues 353–369 (QISQQLIPTEASTSURU).

This sequence belongs to the selenoprotein P family. In terms of processing, phosphorylation sites are present in the extracellular medium.

It is found in the secreted. Functionally, might be responsible for some of the extracellular antioxidant defense properties of selenium or might be involved in the transport of selenium. May supply selenium to tissues such as brain and testis. The polypeptide is Selenoprotein P (Pongo abelii (Sumatran orangutan)).